Here is a 204-residue protein sequence, read N- to C-terminus: UPF0056 membrane protein CT_852 (204 aa).

6 helical membrane passes run 9–29, 39–59, 66–86, 107–127, 138–158, and 176–196; these read TLLF…IALL, HIIL…VTFG, LGII…SIAI, IFFP…STLG, IVLG…LLSS, and FGIS…STAF.

Belongs to the UPF0056 (MarC) family.

The protein resides in the cell membrane. This chain is UPF0056 membrane protein CT_852, found in Chlamydia trachomatis serovar D (strain ATCC VR-885 / DSM 19411 / UW-3/Cx).